The following is a 225-amino-acid chain: ATP-dependent dethiobiotin synthetase BioD (225 aa).

12 to 17 (EVGKTY) contacts ATP. Residue threonine 16 participates in Mg(2+) binding. Lysine 37 is an active-site residue. Residue serine 41 participates in substrate binding. ATP is bound by residues aspartate 52, 114 to 117 (EGAG), and 174 to 175 (NC). Mg(2+)-binding residues include aspartate 52 and glutamate 114.

The protein belongs to the dethiobiotin synthetase family. In terms of assembly, homodimer. It depends on Mg(2+) as a cofactor.

It is found in the cytoplasm. It catalyses the reaction (7R,8S)-7,8-diammoniononanoate + CO2 + ATP = (4R,5S)-dethiobiotin + ADP + phosphate + 3 H(+). It functions in the pathway cofactor biosynthesis; biotin biosynthesis; biotin from 7,8-diaminononanoate: step 1/2. In terms of biological role, catalyzes a mechanistically unusual reaction, the ATP-dependent insertion of CO2 between the N7 and N8 nitrogen atoms of 7,8-diaminopelargonic acid (DAPA, also called 7,8-diammoniononanoate) to form a ureido ring. The polypeptide is ATP-dependent dethiobiotin synthetase BioD (Francisella tularensis subsp. novicida (strain U112)).